The sequence spans 70 residues: MRLEKIAAKALENVGFDRYLLSIAVAKRANELATGKEPLVEVDVKKYKYTDIALMEIAEGKLKIEVEKES.

This sequence belongs to the RNA polymerase subunit omega family. The RNAP catalytic core consists of 2 alpha, 1 beta, 1 beta' and 1 omega subunit. When a sigma factor is associated with the core the holoenzyme is formed, which can initiate transcription.

It catalyses the reaction RNA(n) + a ribonucleoside 5'-triphosphate = RNA(n+1) + diphosphate. Its function is as follows. Promotes RNA polymerase assembly. Latches the N- and C-terminal regions of the beta' subunit thereby facilitating its interaction with the beta and alpha subunits. The chain is DNA-directed RNA polymerase subunit omega from Nitratiruptor sp. (strain SB155-2).